A 420-amino-acid polypeptide reads, in one-letter code: Serine--tRNA ligase (420 aa).

An L-serine-binding site is contributed by 225–227; that stretch reads TLE. Residue 256–258 participates in ATP binding; it reads RQE. Residue E279 participates in L-serine binding. An ATP-binding site is contributed by 343 to 346; the sequence is EVSS. An L-serine-binding site is contributed by T379.

This sequence belongs to the class-II aminoacyl-tRNA synthetase family. Type-1 seryl-tRNA synthetase subfamily. Homodimer. The tRNA molecule binds across the dimer.

It localises to the cytoplasm. It carries out the reaction tRNA(Ser) + L-serine + ATP = L-seryl-tRNA(Ser) + AMP + diphosphate + H(+). It catalyses the reaction tRNA(Sec) + L-serine + ATP = L-seryl-tRNA(Sec) + AMP + diphosphate + H(+). It participates in aminoacyl-tRNA biosynthesis; selenocysteinyl-tRNA(Sec) biosynthesis; L-seryl-tRNA(Sec) from L-serine and tRNA(Sec): step 1/1. Functionally, catalyzes the attachment of serine to tRNA(Ser). Is also able to aminoacylate tRNA(Sec) with serine, to form the misacylated tRNA L-seryl-tRNA(Sec), which will be further converted into selenocysteinyl-tRNA(Sec). The protein is Serine--tRNA ligase of Mycoplasma pneumoniae (strain ATCC 29342 / M129 / Subtype 1) (Mycoplasmoides pneumoniae).